The following is a 798-amino-acid chain: MNLEIKHAILVLWIFLQVQGIKDTSTKTHSSGTKNIDKAPRIETTESTSAVHKASTMKRLFAVAKLRNKRSALFPAVNICPRESLRQILESLQEYYRLRVCQEIVWEAYRIFLDRVPDTEEYQDWVSLCQKETFCLFDIGKNFSNSQEHLDLLQQRIFQRSFSGRKDDMSPIEILGVPTTAPVLPIDVSSMSLRPFPLPPDDTDLKEVTIKDIQTPIAIRRAELESKPEPTHVTEISSEEKVEFSISLPNHRFKAELTNSRSPYYQELVGQSQLQLQKIFKKLPGFGEIRVLGFRPKKEEDGSSSTEIQLMAIFKRDHAESKGPESDLLSLDSNKIERERIHHGAIEDKQPEAYLTAADLKKLIIRLLDGDQPLVGGTVPFSDEVTEPLFRPVTQSELPKPLTDVTEDVTLSPELPFSEPRLESVDIYGPYLPDSSWSRPVTASTSGVGNLPSFTPSIFALDDQSSPPLMATGPTAFIPTLTLPISDYSTVRQWPLEVSHWPESSSDRELSTTSSHDTIRDLDEMDVSDTPALSEIAELSGYDSAPDRFLEMTTPIPTLQYVTXSSETIAAKGHELVVFFSLRVANMPFSYDLFNKSSLEYQALEQRFTDLLVPYLRSNLTGFKQLEILSFRNGSVIVNSKVRFAKAVPYNLTQAVRGVLEDLRSTAAQELNLEIESYSLDIEPADQADPCKFLDCGKFAQCIKNELTEEAECRCRQGHESHGTLEYQELNLCPPGKTCEASQGQATPCRPPDHSTNQARQPSVKKLQRQQNKVVKKRNSELSATDFEELDDQDWEGN.

Residues 1 to 20 (MNLEIKHAILVLWIFLQVQG) form the signal peptide. A glycan (N-linked (GlcNAc...) asparagine) is linked at asparagine 142. The region spanning 238–360 (SEEKVEFSIS…PEAYLTAADL (123 aa)) is the SEA 1 domain. O-linked (GalNAc...) threonine glycosylation is found at threonine 442 and threonine 445. An SEA 2 domain is found at 574-687 (HELVVFFSLR…YSLDIEPADQ (114 aa)). 2 N-linked (GlcNAc...) asparagine glycosylation sites follow: asparagine 595 and asparagine 619. A Heparin- and hyaluronan-binding motif is present at residues 624-632 (KQLEILSFR). Asparagine 633 and asparagine 651 each carry an N-linked (GlcNAc...) asparagine glycan. The interval 741–798 (ASQGQATPCRPPDHSTNQARQPSVKKLQRQQNKVVKKRNSELSATDFEELDDQDWEGN) is disordered. Residues 786–798 (DFEELDDQDWEGN) show a composition bias toward acidic residues.

Highly glycosylated (N- and O-linked carbohydrates and sialic acid).

It localises to the cell projection. It is found in the cilium. The protein localises to the photoreceptor outer segment. Its subcellular location is the secreted. The protein resides in the extracellular space. It localises to the extracellular matrix. It is found in the interphotoreceptor matrix. The protein localises to the photoreceptor inner segment. Functionally, chondroitin sulfate-, heparin- and hyaluronan-binding protein. May serve to form a basic macromolecular scaffold comprising the insoluble interphotoreceptor matrix. The sequence is that of Interphotoreceptor matrix proteoglycan 1 from Rattus norvegicus (Rat).